Here is a 166-residue protein sequence, read N- to C-terminus: Spiderine-1b (166 aa).

Residues 1–18 (MKFALVLLGICAFYLVNA) form the signal peptide. The propeptide at 19–58 (TGDLETELEASELQELQEALDLIGETSLESLEAEELEEAR) is removed in mature form. Positions 59–99 (KFKWGKLFSAAKKLYKKGKKLSKNKNFKKALKFGKQLAKNL) are linear cationic cytotoxin domain. One can recognise an Oxytoxin-type inhibitor cystine knot (ICK) domain in the interval 113 to 166 (NNKCWAIGTTCSDDCDCCPEHHCHCPAGKWLPGLFRCTCQVTESDKVNKCPPAE). Disulfide bonds link cysteine 116-cysteine 130, cysteine 123-cysteine 135, cysteine 127-cysteine 162, cysteine 129-cysteine 151, and cysteine 137-cysteine 149.

The protein belongs to the spiderine family. Cationic/spiderine subfamily. Expressed by the venom gland.

The protein resides in the secreted. Has antimicrobial, insecticidal, cytolytic and cytotoxic activity. In Oxyopes takobius (Lynx spider), this protein is Spiderine-1b.